A 436-amino-acid polypeptide reads, in one-letter code: UPF0597 protein YhaM (436 aa).

This sequence belongs to the UPF0597 family.

In Salmonella gallinarum (strain 287/91 / NCTC 13346), this protein is UPF0597 protein YhaM.